The following is a 949-amino-acid chain: Coiled-coil domain-containing protein 80 (949 aa).

Residues 1-22 form the signal peptide; that stretch reads MMWKMGPHFTTLLAMWLVCGSA. Disordered regions lie at residues 24 to 79, 112 to 132, and 289 to 610; these read HSPA…RRKS, SSAR…MLRF, and HVVQ…PKKS. Basic and acidic residues predominate over residues 112-123; the sequence is SSAREMVRDEGS. Gly residues predominate over residues 295–307; the sequence is NEGGGGAGGTGLG. The segment covering 308–328 has biased composition (basic and acidic residues); the sequence is GDKRKEDPRRTQVHPTREAPR. Positions 345 to 380 are enriched in low complexity; sequence RATTLPPAPVTTATRATSRVVTIAARPTTTTAYPAT. Positions 419–429 are enriched in basic and acidic residues; it reads PRKEQQREKPQ. Residues 436 to 445 are compositionally biased toward polar residues; that stretch reads KATNYGSFTA. Over residues 463-477 the composition is skewed to basic and acidic residues; sequence RFRDNRTDKREHGHQ. A glycan (N-linked (GlcNAc...) asparagine) is linked at asparagine 467. Residues 487-498 show a composition bias toward basic residues; it reads KPVKGKLPKKKD. Basic and acidic residues-rich tracts occupy residues 499–510, 534–548, and 556–581; these read RILSNEYEDKYD, KESK…PEKE, and AKQD…EKDK. Residues lysine 544 and lysine 547 each participate in a glycyl lysine isopeptide (Lys-Gly) (interchain with G-Cter in SUMO2) cross-link. Residues 554-587 are a coiled coil; it reads KSAKQDKLLKSEKQAKKAEKKTKQEKDKNKKKKA.

Belongs to the CCDC80 family. As to quaternary structure, binds to various extracellular matrix proteins. Phosphorylated. Expressed in brain, stomach, colon, rectum, liver, lung, kidney, adipocytes and testis.

The protein resides in the secreted. It localises to the extracellular space. Its subcellular location is the extracellular matrix. Functionally, promotes cell adhesion and matrix assembly. This Mus musculus (Mouse) protein is Coiled-coil domain-containing protein 80 (Ccdc80).